We begin with the raw amino-acid sequence, 382 residues long: Chaperone protein DnaJ (382 aa).

The J domain occupies 4-69; sequence DYYEVLGVSR…DKRRRYDQFG (66 aa). The CR-type zinc-finger motif lies at 138–219; the sequence is GVEKTIKIKK…CYGEGIKQGE (82 aa). Residues Cys-151, Cys-154, Cys-167, Cys-170, Cys-193, Cys-196, Cys-207, and Cys-210 each contribute to the Zn(2+) site. 4 CXXCXGXG motif repeats span residues 151-158, 167-174, 193-200, and 207-214; these read CKECNGSG, CPTCHGAG, CPTCGGEG, and CPSCYGEG.

Belongs to the DnaJ family. Homodimer. Zn(2+) is required as a cofactor.

The protein resides in the cytoplasm. In terms of biological role, participates actively in the response to hyperosmotic and heat shock by preventing the aggregation of stress-denatured proteins and by disaggregating proteins, also in an autonomous, DnaK-independent fashion. Unfolded proteins bind initially to DnaJ; upon interaction with the DnaJ-bound protein, DnaK hydrolyzes its bound ATP, resulting in the formation of a stable complex. GrpE releases ADP from DnaK; ATP binding to DnaK triggers the release of the substrate protein, thus completing the reaction cycle. Several rounds of ATP-dependent interactions between DnaJ, DnaK and GrpE are required for fully efficient folding. Also involved, together with DnaK and GrpE, in the DNA replication of plasmids through activation of initiation proteins. This chain is Chaperone protein DnaJ, found in Chlorobium luteolum (strain DSM 273 / BCRC 81028 / 2530) (Pelodictyon luteolum).